We begin with the raw amino-acid sequence, 212 residues long: Prolactin (212 aa).

Positions 1–24 (MAQRKTNGSKLFMMVLYMVAACSA) are cleaved as a signal peptide. Disulfide bonds link cysteine 70–cysteine 185 and cysteine 202–cysteine 212.

Belongs to the somatotropin/prolactin family. As to expression, pituitary gland.

It is found in the secreted. The sequence is that of Prolactin (prl) from Dicentrarchus labrax (European seabass).